Here is a 437-residue protein sequence, read N- to C-terminus: GTPase Der (437 aa).

2 consecutive EngA-type G domains span residues 4–168 (PVVA…PAED) and 177–352 (IRVS…QAHS). GTP-binding positions include 10-17 (GRPNVGKS), 57-61 (DTGGI), 120-123 (NKAD), 183-190 (GRPNVGKS), 230-234 (DTAGM), and 295-298 (NKWD). The region spanning 353–437 (MRIPTAVLND…PVRIWTRKKT (85 aa)) is the KH-like domain.

The protein belongs to the TRAFAC class TrmE-Era-EngA-EngB-Septin-like GTPase superfamily. EngA (Der) GTPase family. Associates with the 50S ribosomal subunit.

Functionally, GTPase that plays an essential role in the late steps of ribosome biogenesis. This chain is GTPase Der, found in Brevibacillus brevis (strain 47 / JCM 6285 / NBRC 100599).